A 226-amino-acid polypeptide reads, in one-letter code: X-linked lymphocyte-regulated protein 3C (226 aa).

Residues Met-1–Val-66 are disordered. Basic and acidic residues predominate over residues Ala-8 to Met-18. A compositionally biased stretch (polar residues) spans Asn-21–Pro-30. Basic and acidic residues-rich tracts occupy residues Glu-39–Ile-48 and Gln-56–Val-66. Positions Glu-155 to Gln-210 form a coiled coil.

The protein belongs to the XLR/SYCP3 family. In terms of tissue distribution, expressed in lymphoid cells.

The sequence is that of X-linked lymphocyte-regulated protein 3C (Xlr3c) from Mus musculus (Mouse).